The chain runs to 115 residues: Probable mycobacterial cidal antitoxin Rv3188 (115 aa).

It belongs to the MbcA/ParS/Xre antitoxin family. As to quaternary structure, forms a heterotetramer with cognate toxin Rv3189.

Its function is as follows. Probable antitoxin component of a type II toxin-antitoxin (TA) system. Neutralizes the activity of cognate toxin Rv3189 by blocking access to the toxin active site. This Mycobacterium tuberculosis (strain ATCC 25618 / H37Rv) protein is Probable mycobacterial cidal antitoxin Rv3188.